We begin with the raw amino-acid sequence, 412 residues long: Chorismate synthase (412 aa).

Residues R40 and R46 each contribute to the NADP(+) site. FMN-binding positions include 135–137 (RAS), 256–257 (QA), G300, 315–319 (KPIST), and R341. The segment covering 391-404 (QREPRQESSDEQPA) has biased composition (basic and acidic residues). The interval 391-412 (QREPRQESSDEQPARRAANTAG) is disordered.

The protein belongs to the chorismate synthase family. Homotetramer. The cofactor is FMNH2.

The enzyme catalyses 5-O-(1-carboxyvinyl)-3-phosphoshikimate = chorismate + phosphate. It participates in metabolic intermediate biosynthesis; chorismate biosynthesis; chorismate from D-erythrose 4-phosphate and phosphoenolpyruvate: step 7/7. Its function is as follows. Catalyzes the anti-1,4-elimination of the C-3 phosphate and the C-6 proR hydrogen from 5-enolpyruvylshikimate-3-phosphate (EPSP) to yield chorismate, which is the branch point compound that serves as the starting substrate for the three terminal pathways of aromatic amino acid biosynthesis. This reaction introduces a second double bond into the aromatic ring system. In Mycobacteroides abscessus (strain ATCC 19977 / DSM 44196 / CCUG 20993 / CIP 104536 / JCM 13569 / NCTC 13031 / TMC 1543 / L948) (Mycobacterium abscessus), this protein is Chorismate synthase.